A 206-amino-acid polypeptide reads, in one-letter code: 2,3-bisphosphoglycerate-dependent phosphoglycerate mutase (206 aa).

Substrate is bound by residues 9–16 (RHGQSEWN), 22–23 (TG), R61, 88–91 (ERDY), K99, 115–116 (RR), and 159–160 (GN). H10 functions as the Tele-phosphohistidine intermediate in the catalytic mechanism. The active-site Proton donor/acceptor is E88.

The protein belongs to the phosphoglycerate mutase family. BPG-dependent PGAM subfamily. In terms of assembly, homodimer.

It catalyses the reaction (2R)-2-phosphoglycerate = (2R)-3-phosphoglycerate. It participates in carbohydrate degradation; glycolysis; pyruvate from D-glyceraldehyde 3-phosphate: step 3/5. Its function is as follows. Catalyzes the interconversion of 2-phosphoglycerate and 3-phosphoglycerate. The sequence is that of 2,3-bisphosphoglycerate-dependent phosphoglycerate mutase from Brucella ovis (strain ATCC 25840 / 63/290 / NCTC 10512).